The primary structure comprises 423 residues: Aspartate aminotransferase, mitochondrial (423 aa).

A mitochondrion-targeting transit peptide spans 1-22 (MALLQSRLLLSAPRRAAATARA). Residues Gly-58, Trp-155, and Asn-208 each coordinate substrate. Lys-272 carries the N6-(pyridoxal phosphate)lysine modification. Residue Arg-400 coordinates substrate.

This sequence belongs to the class-I pyridoxal-phosphate-dependent aminotransferase family. In terms of assembly, homodimer. The cofactor is pyridoxal 5'-phosphate. In terms of tissue distribution, detected in heart (at protein level).

The protein resides in the mitochondrion matrix. The catalysed reaction is L-aspartate + 2-oxoglutarate = oxaloacetate + L-glutamate. It carries out the reaction L-kynurenine + 2-oxoglutarate = kynurenate + L-glutamate + H2O. Its function is as follows. Catalyzes the irreversible transamination of the L-tryptophan metabolite L-kynurenine to form kynurenic acid (KA). As a member of the malate-aspartate shuttle, it has a key role in the intracellular NAD(H) redox balance. Is important for metabolite exchange between mitochondria and cytosol, and for amino acid metabolism. This chain is Aspartate aminotransferase, mitochondrial (GOT2), found in Gallus gallus (Chicken).